The chain runs to 342 residues: Phomopsin biosynthesis cluster protein B (342 aa).

A disordered region spans residues 1–22 (MESIAKAKSLPNKGRTYDSQRP). Residues 87–107 (VLIIGCAVISLFAIIGALGFA) form a helical membrane-spanning segment. The interval 118–186 (CASPAHQNPH…QCGESPDEAQ (69 aa)) is disordered. Residues 144–155 (HSGSHSSSSSTN) are compositionally biased toward low complexity. Asn248 carries an N-linked (GlcNAc...) asparagine glycan.

It localises to the membrane. In terms of biological role, part of the gene cluster that mediates the biosynthesis of the phomopsins, a group of hexapeptide mycotoxins which infects lupins and causes lupinosis disease in livestock. The role of phomB within the phomopsins biosynthesis pathway has still to be determined. The pathway starts with the processing of the precursor phomA by several endopeptidases including kexin proteases as well as the cluster-specific S41 family peptidase phomP1 and the oligopeptidase phomG to produce 10 identical copies of the hexapeptide Tyr-Val-Ile-Pro-Ile-Asp. After being excised from the precursor peptide, the core peptides are cyclized and modified post-translationally by enzymes encoded within the gene cluster. The timing and order of proteolysis of the phomA precursor and PTMs are still unknown. Two tyrosinase-like enzymes, phomQ1 and phomQ2, catalyze the chlorination and hydroxylation of Tyr, respectively. PhomYb, is proposed to be involved in the construction of the macrocyclic structure. The other 4 ustYa family proteins may be involved in PTMs that generate the unique structure of phomopsin A. PhomYa is required for the hydroxylation of C-beta of Tyr. PhomYc, phomYd, and phomYe are responsible for the biosynthesis of 2,3-dehydroisoleucine (dIle), 2,3-dehydroaspartic acid (dAsp), and 3,4-dehydroproline (dPro), respectively. While dIle formation by phomYc is indispensable for the installation of dAsp by phomYd, the order of the other PTMs have not been elucidated yet. Most of the biosynthetic enzymes likely have broad substrate specificity, and thus, there might be a metabolic grid from a precursor to phomopsin A. The enzyme(s) responsible for the biosynthesis of 3,4-dehydrovaline (dVal) have also not been identified yet. Finally, phomM acts as an S-adenosylmethionine-dependent alpha-N-methyltransferase that catalyzes two successive N-methylation reactions, converting N-desmethyl-phomopsin A to phomopsin A and phomopsin A further to an N,N-dimethylated congener called phomopsin E. The chain is Phomopsin biosynthesis cluster protein B from Diaporthe leptostromiformis (Lupinosis disease fungus).